The chain runs to 251 residues: Ubiquinone/menaquinone biosynthesis C-methyltransferase UbiE (251 aa).

S-adenosyl-L-methionine-binding positions include Thr-74, Asp-95, 123–124 (NA), and Ser-140.

The protein belongs to the class I-like SAM-binding methyltransferase superfamily. MenG/UbiE family.

It carries out the reaction a 2-demethylmenaquinol + S-adenosyl-L-methionine = a menaquinol + S-adenosyl-L-homocysteine + H(+). The catalysed reaction is a 2-methoxy-6-(all-trans-polyprenyl)benzene-1,4-diol + S-adenosyl-L-methionine = a 5-methoxy-2-methyl-3-(all-trans-polyprenyl)benzene-1,4-diol + S-adenosyl-L-homocysteine + H(+). Its pathway is quinol/quinone metabolism; menaquinone biosynthesis; menaquinol from 1,4-dihydroxy-2-naphthoate: step 2/2. The protein operates within cofactor biosynthesis; ubiquinone biosynthesis. Its function is as follows. Methyltransferase required for the conversion of demethylmenaquinol (DMKH2) to menaquinol (MKH2) and the conversion of 2-polyprenyl-6-methoxy-1,4-benzoquinol (DDMQH2) to 2-polyprenyl-3-methyl-6-methoxy-1,4-benzoquinol (DMQH2). This Cronobacter sakazakii (strain ATCC BAA-894) (Enterobacter sakazakii) protein is Ubiquinone/menaquinone biosynthesis C-methyltransferase UbiE.